Reading from the N-terminus, the 129-residue chain is Small ribosomal subunit protein bS18c (129 aa).

The disordered stretch occupies residues 1 to 20 (MGTSNTQKPQKQVPKRKKYK).

The protein belongs to the bacterial ribosomal protein bS18 family. In terms of assembly, part of the 30S ribosomal subunit.

It is found in the plastid. Its subcellular location is the chloroplast. The sequence is that of Small ribosomal subunit protein bS18c from Stigeoclonium helveticum (Green alga).